A 402-amino-acid chain; its full sequence is NADH-quinone oxidoreductase subunit D (402 aa).

Belongs to the complex I 49 kDa subunit family. In terms of assembly, NDH-1 is composed of 14 different subunits. Subunits NuoB, C, D, E, F, and G constitute the peripheral sector of the complex.

It is found in the cell inner membrane. It carries out the reaction a quinone + NADH + 5 H(+)(in) = a quinol + NAD(+) + 4 H(+)(out). Functionally, NDH-1 shuttles electrons from NADH, via FMN and iron-sulfur (Fe-S) centers, to quinones in the respiratory chain. The immediate electron acceptor for the enzyme in this species is believed to be ubiquinone. Couples the redox reaction to proton translocation (for every two electrons transferred, four hydrogen ions are translocated across the cytoplasmic membrane), and thus conserves the redox energy in a proton gradient. This Azorhizobium caulinodans (strain ATCC 43989 / DSM 5975 / JCM 20966 / LMG 6465 / NBRC 14845 / NCIMB 13405 / ORS 571) protein is NADH-quinone oxidoreductase subunit D.